The primary structure comprises 520 residues: Acetylcholine receptor subunit delta (520 aa).

The N-terminal stretch at 1–24 (MAGPVLTLGLLAALVVCALPGSWG) is a signal peptide. The Extracellular segment spans residues 25–248 (LNEEQRLIQH…VTFYLIIRRK (224 aa)). Residues Asn100, Asn167, and Asn193 are each glycosylated (N-linked (GlcNAc...) asparagine). Cys154 and Cys168 are oxidised to a cystine. 3 helical membrane-spanning segments follow: residues 249-273 (PLFY…VFYL), 281-299 (TSVA…LLIS), and 315-336 (FLLF…VLNI). The Cytoplasmic segment spans residues 337 to 474 (HFRTPSTHVL…WNQVARTVDR (138 aa)). The residue at position 393 (Tyr393) is a Phosphotyrosine; by Tyr-kinases. Residues 475–493 (LCLFVVTPVMVVGTAWIFL) form a helical membrane-spanning segment.

This sequence belongs to the ligand-gated ion channel (TC 1.A.9) family. Acetylcholine receptor (TC 1.A.9.1) subfamily. Delta/CHRND sub-subfamily. In terms of assembly, pentamer of two alpha chains, and one each of the beta, delta, and gamma (in immature muscle) or epsilon (in mature muscle) chains. The muscle heteropentamer composed of alpha-1, beta-1, delta, epsilon subunits interacts with the alpha-conotoxin ImII.

Its subcellular location is the postsynaptic cell membrane. It localises to the cell membrane. It catalyses the reaction K(+)(in) = K(+)(out). The catalysed reaction is Na(+)(in) = Na(+)(out). Its function is as follows. After binding acetylcholine, the AChR responds by an extensive change in conformation that affects all subunits and leads to opening of an ion-conducting channel across the plasma membrane. In Mus musculus (Mouse), this protein is Acetylcholine receptor subunit delta (Chrnd).